Reading from the N-terminus, the 74-residue chain is Control protein C.MunI (74 aa).

One can recognise an HTH cro/C1-type domain in the interval 12–67; that stretch reads LKKLRKEKTDLSQESFAAQIDLDRTYYSSIENGKRNVSLVNLEKISAGLGITLSEL. Residues 23–42 constitute a DNA-binding region (H-T-H motif); sequence SQESFAAQIDLDRTYYSSIE.

Functionally, probably controls expression of its associated restriction-modification system MunI. This is Control protein C.MunI from Mycoplasma sp.